A 61-amino-acid polypeptide reads, in one-letter code: Conotoxin Vn5.3 (61 aa).

The N-terminal stretch at 1-19 is a signal peptide; that stretch reads MRCLPVFVILLLLIASAPG. A propeptide spanning residues 20–50 is cleaved from the precursor; that stretch reads VDVQPKTKYYVPRASRRDFAKKTPKRLSKLR.

Belongs to the conotoxin T superfamily. Contains 2 disulfide bonds that can be either 'C1-C3, C2-C4' or 'C1-C4, C2-C3', since these disulfide connectivities have been observed for conotoxins with cysteine framework V (for examples, see AC P0DQQ7 and AC P81755). As to expression, expressed by the venom duct.

Its subcellular location is the secreted. This Conus ventricosus (Mediterranean cone) protein is Conotoxin Vn5.3.